A 261-amino-acid polypeptide reads, in one-letter code: 8-demethyl-8-(2,3-dimethoxy-alpha-L-rhamnosyl)-tetracenomycin-C 4'-O-methyltransferase (261 aa).

S-adenosyl-L-methionine-binding positions include 53–54 (TM), 81–85 (ETGVW), 111–115 (DSFEG), F167, 185–186 (DG), and S191. D185 provides a ligand contact to Mg(2+). Mg(2+) contacts are provided by D212 and D213.

It belongs to the methyltransferase TylF/MycF family. Requires Mg(2+) as cofactor.

The enzyme catalyses 8-demethyl-8-(2,3-di-O-methyl-alpha-L-rhamnosyl)-tetracenomycin C + S-adenosyl-L-methionine = 8-demethyl-8-(2,3,4-tri-O-methyl-alpha-L-rhamnosyl)-tetracenomycin C + S-adenosyl-L-homocysteine + H(+). It functions in the pathway antibiotic biosynthesis. Functionally, O-methyltransferase involved in the biosynthesis of the permethylated L-rhamnose moiety of elloramycin, an antitumor polyketide. Mediates the methylation of the hydroxy groups at the 4'-position after the sugar moiety has been attached to the aglycon. The chain is 8-demethyl-8-(2,3-dimethoxy-alpha-L-rhamnosyl)-tetracenomycin-C 4'-O-methyltransferase from Streptomyces olivaceus.